Reading from the N-terminus, the 216-residue chain is uncharacterized protein (216 aa).

A helical membrane pass occupies residues 39–59 (VLPLTFIGSLLILILTIVYYF). Residues 59–108 (FTLSGSVNELKNEISKEKSKKERLLSEIKRLEELKKTLETKKAIYEVVKI) are a coiled coil.

The protein localises to the membrane. This is an uncharacterized protein from Aquifex aeolicus (strain VF5).